A 55-amino-acid polypeptide reads, in one-letter code: ATP synthase protein 8 (55 aa).

Residues Leu4–Leu24 traverse the membrane as a helical segment.

This sequence belongs to the ATPase protein 8 family. In terms of assembly, F-type ATPases have 2 components, CF(1) - the catalytic core - and CF(0) - the membrane proton channel.

Its subcellular location is the mitochondrion membrane. Functionally, mitochondrial membrane ATP synthase (F(1)F(0) ATP synthase or Complex V) produces ATP from ADP in the presence of a proton gradient across the membrane which is generated by electron transport complexes of the respiratory chain. F-type ATPases consist of two structural domains, F(1) - containing the extramembraneous catalytic core and F(0) - containing the membrane proton channel, linked together by a central stalk and a peripheral stalk. During catalysis, ATP synthesis in the catalytic domain of F(1) is coupled via a rotary mechanism of the central stalk subunits to proton translocation. Part of the complex F(0) domain. Minor subunit located with subunit a in the membrane. The polypeptide is ATP synthase protein 8 (mt-atp8) (Polypterus ornatipinnis (Ornate bichir)).